The chain runs to 289 residues: ATP synthase gamma chain (289 aa).

It belongs to the ATPase gamma chain family. F-type ATPases have 2 components, CF(1) - the catalytic core - and CF(0) - the membrane proton channel. CF(1) has five subunits: alpha(3), beta(3), gamma(1), delta(1), epsilon(1). CF(0) has three main subunits: a, b and c.

Its subcellular location is the cell inner membrane. In terms of biological role, produces ATP from ADP in the presence of a proton gradient across the membrane. The gamma chain is believed to be important in regulating ATPase activity and the flow of protons through the CF(0) complex. This chain is ATP synthase gamma chain, found in Cereibacter sphaeroides (strain ATCC 17029 / ATH 2.4.9) (Rhodobacter sphaeroides).